The following is a 1984-amino-acid chain: Spermatogenesis-associated protein 31H1 (1984 aa).

Disordered stretches follow at residues 448 to 467 (MGLTKSKNQSMKSPGTTPGP), 1045 to 1067 (PMEESEDSQSDSQTRISESQHSL), 1181 to 1287 (YRER…SDSK), 1326 to 1346 (RIGATQTSTASLKRQPKKPSQ), and 1439 to 1984 (QQPR…EATR). Composition is skewed to polar residues over residues 450–463 (LTKSKNQSMKSPGT), 1058–1067 (TRISESQHSL), and 1205–1226 (TQASKSPTSTIDLQSGPSQSPA). The span at 1238 to 1247 (SRPDLVEKTK) shows a compositional bias: basic and acidic residues. Polar residues-rich tracts occupy residues 1458–1471 (TDSQSGIAFQTASV) and 1492–1508 (RNETSSQESKNLSTPGT). Composition is skewed to basic and acidic residues over residues 1532 to 1558 (DKLTHKEHNHPSFYRERTPRGPSERTR) and 1568 to 1579 (SPSERSQRSSLE). A run of 3 repeats spans residues 1593 to 1600 (PSRKNHSS), 1601 to 1608 (PSERSWRS), and 1609 to 1616 (PSQRNHCS). The interval 1593-1935 (PSRKNHSSPS…CSPSERSRRS (343 aa)) is 27 X 8 AA approximate tandem repeat of P-S-E-R-S-H-H-S. Positions 1599–1610 (SSPSERSWRSPS) are enriched in low complexity. Over residues 1620–1630 (RSCHSLSERGL) the composition is skewed to basic and acidic residues. The span at 1636-1647 (RSHRGPSQRRHH) shows a compositional bias: basic residues. Repeat copies occupy residues 1641 to 1648 (PSQRRHHS), 1649 to 1656 (PSERSHRS), and 1657 to 1664 (PSERSHRS). Basic and acidic residues predominate over residues 1648-1667 (SPSERSHRSPSERSHRSSSE). The span at 1668–1679 (RRHRSPSQRSHR) shows a compositional bias: basic residues. Residues 1680–1691 (GPSERSHCSPSE) show a composition bias toward basic and acidic residues. Repeat copies occupy residues 1681–1688 (PSERSHCS), 1689–1696 (PSERRHRS), 1697–1704 (PSQRSHRG), 1705–1712 (PSERRHHS), 1713–1720 (PSKRSHRS), 1721–1728 (PARRSHRS), 1729–1736 (PSERSHHS), 1737–1744 (PSERSHHS), 1745–1752 (PSERRHHS), 1753–1760 (PSERSHCS), 1761–1768 (PSERSHCS), 1769–1776 (PSERRHRS), 1777–1784 (PSERRHHS), 1785–1792 (PSEKSHHS), 1793–1800 (PSERSHHS), 1801–1808 (PSERRRHS), 1848–1855 (PSEKSHLS), 1864–1871 (PSERRGHS), and 1880–1887 (PSERSHRS). Over residues 1692 to 1727 (RRHRSPSQRSHRGPSERRHHSPSKRSHRSPARRSHR) the composition is skewed to basic residues. A compositionally biased stretch (basic and acidic residues) spans 1728-1869 (SPSERSHHSP…SRCSPSERRG (142 aa)). Basic and acidic residues-rich tracts occupy residues 1895–1917 (RTSERSHRSSCERTRHSPSEMRP), 1928–1941 (PSERSRRSPLKEGL), and 1949–1959 (RPSHSLSRDFK). Repeat copies occupy residues 1921 to 1928 (SGRNHCSP) and 1929 to 1935 (SERSRRS). Residues 1960–1969 (NQTTLLGTTH) are compositionally biased toward polar residues.

As to expression, expressed in sperm (at protein level).

The chain is Spermatogenesis-associated protein 31H1 from Homo sapiens (Human).